The following is a 211-amino-acid chain: MHRRSSKSYSSRNSKTPERSKIPDCVIASNKSAEYNYFLDKTFEAGLVLLGSEVKSVRQQKISLSEAYIYEDNSEIWLANLYIPEHKTGGWTNHNPRRLRKLLLHKYQIARLRKDLLIPGITLVPIKFYFRNGRAKLLISLARGKKLIDKREVIKEREATLEANRALKHRLRRPRAQRNTQRSVTPRSTRENKNVQRNKARSARCNVRHEN.

2 disordered regions span residues Met1–Ser20 and Arg170–Asn211. A compositionally biased stretch (polar residues) spans Gln177 to Arg187.

It belongs to the SmpB family.

Its subcellular location is the cytoplasm. In terms of biological role, required for rescue of stalled ribosomes mediated by trans-translation. Binds to transfer-messenger RNA (tmRNA), required for stable association of tmRNA with ribosomes. tmRNA and SmpB together mimic tRNA shape, replacing the anticodon stem-loop with SmpB. tmRNA is encoded by the ssrA gene; the 2 termini fold to resemble tRNA(Ala) and it encodes a 'tag peptide', a short internal open reading frame. During trans-translation Ala-aminoacylated tmRNA acts like a tRNA, entering the A-site of stalled ribosomes, displacing the stalled mRNA. The ribosome then switches to translate the ORF on the tmRNA; the nascent peptide is terminated with the 'tag peptide' encoded by the tmRNA and targeted for degradation. The ribosome is freed to recommence translation, which seems to be the essential function of trans-translation. The polypeptide is SsrA-binding protein (Tropheryma whipplei (strain TW08/27) (Whipple's bacillus)).